Reading from the N-terminus, the 920-residue chain is Whirlin (920 aa).

A PDZ 1 domain is found at Leu141 to Arg224. Residues Gln241–Asp262 are disordered. The segment covering Gly242–Leu257 has biased composition (polar residues). The region spanning Lys278–Arg360 is the PDZ 2 domain. Disordered regions lie at residues Met502–Thr536, Cys561–Asp603, Phe630–Ala730, and Arg752–Thr828. Residues Ser520–Thr536 show a composition bias toward low complexity. Polar residues predominate over residues Cys561–Ala570. Pro residues-rich tracts occupy residues Ile589–Leu598 and Arg636–Gly651. The segment covering Ala655–Ser674 has biased composition (polar residues). Position 698 is a phosphoserine (Ser698). 2 stretches are compositionally biased toward polar residues: residues Gln756–Glu775 and Glu785–Asn800. Over residues Asn802–Thr813 the composition is skewed to basic and acidic residues. Residues Leu829 to Leu912 form the PDZ 3 domain.

In terms of assembly, forms homooligomers. Interacts (via C-terminal PDZ domain) with MYO15A; this interaction is necessary for localization of WHRN to stereocilia tips. Interacts (via C-terminal PDZ domain) with MPP1/p55. Interacts with LRRC4C/NGL1. Interacts with MYO7A. Interacts with RPGR. Interacts with EPS8. Interacts with CASK. Interacts with CIB2. Component of USH2 complex, composed of ADGRV1, PDZD7, USH2A and WHRN. Interacts (via PDZ domains) with PDZD7; the interaction is direct. Interacts (via N-terminal PDZ domain) with USH2A (via cytoplasmic region). Interacts with ADGRV1/MASS1 (via cytoplasmic region). As to expression, ubiquitous. Highly expressed in heart, spleen, lung and liver. Highly expressed in brain, in the olfactory bulb, thalamus, layers III-V of the cerebral cortex and the molecular layer of cerebellum. Detected in soma and dendrites of thalamic neurons, and in cerebrum in cell bodies and apical dendrites of pyramidal neurons. Expressed in retina and inner ear.

The protein resides in the cytoplasm. The protein localises to the cell projection. It localises to the stereocilium. Its subcellular location is the growth cone. It is found in the synapse. Involved in hearing and vision as member of the USH2 complex. Necessary for elongation and maintenance of inner and outer hair cell stereocilia in the organ of Corti in the inner ear. Involved in the maintenance of the hair bundle ankle region, which connects stereocilia in cochlear hair cells of the inner ear. In retina photoreceptors, required for the maintenance of periciliary membrane complex that seems to play a role in regulating intracellular protein transport. This Rattus norvegicus (Rat) protein is Whirlin.